A 132-amino-acid chain; its full sequence is Glycine-rich protein 3 (132 aa).

A signal peptide spans 1-20; that stretch reads MRYAVLLAVVLLLGAFTAEA.

Prismatic layer of shell (at protein level). Expressed primarily in the mantle with highest level in the mantle edge and lower level in the mantle pallium.

Its subcellular location is the secreted. The sequence is that of Glycine-rich protein 3 from Pinctada maxima (Silver-lipped pearl oyster).